The sequence spans 123 residues: Large ribosomal subunit protein uL18 (123 aa).

It belongs to the universal ribosomal protein uL18 family. As to quaternary structure, part of the 50S ribosomal subunit; part of the 5S rRNA/L5/L18/L25 subcomplex. Contacts the 5S and 23S rRNAs.

In terms of biological role, this is one of the proteins that bind and probably mediate the attachment of the 5S RNA into the large ribosomal subunit, where it forms part of the central protuberance. The protein is Large ribosomal subunit protein uL18 of Chlamydia muridarum (strain MoPn / Nigg).